We begin with the raw amino-acid sequence, 114 residues long: MGNNKKDSNSNYPFASPEGEAGVQLVPKLDTPKMYKVILLNDDYTPMDFVVLVLRRFFAKTEEQATEIMLDVHKKGAGVAGVFSLEIAEMKVMQVNQFAQLNQYPLKSTLEEEA.

Belongs to the ClpS family. Binds to the N-terminal domain of the chaperone ClpA.

In terms of biological role, involved in the modulation of the specificity of the ClpAP-mediated ATP-dependent protein degradation. The protein is ATP-dependent Clp protease adapter protein ClpS of Bdellovibrio bacteriovorus (strain ATCC 15356 / DSM 50701 / NCIMB 9529 / HD100).